The chain runs to 373 residues: MLPQVILNHLGSIGEAASTWFSENKYFGSVGQCPPLPKGDLNYDIYMGYPEMFAWDKKRCVAYVSNLYNATVSTWDPYKSVVLDTIHFPGLSHAGNSASPNPLHASGIILRPDAYHAETLEVVIDNGDAFYSDGFNVSGPDHLMSIDLKTKEVTSQLRLNNGLYAGYADASLGPDGNTYVLGTYSSNILRVTPDKEISTFYVAEPLGPPRLYGFTGIAHVGDAMIVPDNIIGQLIRFDVRDKVGTPVTIKQTPYHEFKTANVLHFPERYNDTILLVAENMTPDYPYGGVSVYQDKTKQFNEVEFLGFLPSRLTNALTTSARQMADRIYVVALPTDGANITVAGESSRFPFQDITEELDLMILPEIKDEARDEI.

Belongs to the TRI14 family.

In terms of biological role, part of the core gene cluster that mediates the biosynthesis of trichothecenes, a very large family of chemically related bicyclic sesquiterpene compounds acting as mycotoxins, including T2-toxin. The biosynthesis of trichothecenes begins with the cyclization of farnesyl diphosphate to trichodiene and is catalyzed by the trichodiene synthase TRI5. Trichodiene undergoes a series of oxygenations catalyzed by the cytochrome P450 monooxygenase TRI4. TRI4 controls the addition of four oxygens at C-2, C-3, C-11, and the C-12, C-13-epoxide to form the intermediate isotrichotriol. Isotrichotriol then undergoes a non-enzymatic isomerization and cyclization to form isotrichodermol. During this process, the oxygen at the C-2 position becomes the pyran ring oxygen and the hydroxyl group at C-11 is lost. More complex type A trichothecenes are built by modifying isotrichodermol through a series of paired hydroxylation and acetylation or acylation steps. Isotrichodermol is converted to isotrichodermin by the acetyltransferase TRI101. TRI101 encodes a C-3 transacetylase that acts as a self-protection or resistance factor during biosynthesis and that the presence of a free C-3 hydroxyl group is a key component of Fusarium trichothecene phytotoxicity. A second hydroxyl group is added to C-15 by the trichothecene C-15 hydroxylase TRI11, producing 15-decalonectrin, which is then acetylated by TRI3, producing calonectrin. A third hydroxyl group is added at C-4 by the cytochrome P450 monooxygenase TRI13, converting calonectrin to 3,15-diacetoxyspirpenol, which is subsequently acetylated bythe acetyltransferase TRI7. A fourth hydroxyl group is added to C-8 by the cytochrome P450 monooxygenase TRI1, followed by the addition of an isovaleryl moiety by TRI16. Finally, the acetyl group is removed from the C-3 position by the trichothecene C-3 esterase TRI8 to produce T-2 toxin. In Fusarium sporotrichioides, this protein is Core trichothecene cluster (CTC) protein 14.